The chain runs to 422 residues: Serine--tRNA ligase (422 aa).

230–232 (TAE) lines the L-serine pocket. 261 to 263 (RAE) lines the ATP pocket. Glutamate 284 is a binding site for L-serine. An ATP-binding site is contributed by 348–351 (EISS). Serine 383 lines the L-serine pocket.

Belongs to the class-II aminoacyl-tRNA synthetase family. Type-1 seryl-tRNA synthetase subfamily. In terms of assembly, homodimer. The tRNA molecule binds across the dimer.

It is found in the cytoplasm. The enzyme catalyses tRNA(Ser) + L-serine + ATP = L-seryl-tRNA(Ser) + AMP + diphosphate + H(+). It carries out the reaction tRNA(Sec) + L-serine + ATP = L-seryl-tRNA(Sec) + AMP + diphosphate + H(+). It functions in the pathway aminoacyl-tRNA biosynthesis; selenocysteinyl-tRNA(Sec) biosynthesis; L-seryl-tRNA(Sec) from L-serine and tRNA(Sec): step 1/1. In terms of biological role, catalyzes the attachment of serine to tRNA(Ser). Is also able to aminoacylate tRNA(Sec) with serine, to form the misacylated tRNA L-seryl-tRNA(Sec), which will be further converted into selenocysteinyl-tRNA(Sec). The sequence is that of Serine--tRNA ligase from Pelotomaculum thermopropionicum (strain DSM 13744 / JCM 10971 / SI).